The following is a 152-amino-acid chain: Superoxide dismutase [Cu-Zn] (152 aa).

Cu cation is bound by residues H45, H47, and H62. C56 and C145 are disulfide-bonded. Positions 62, 70, 79, and 82 each coordinate Zn(2+). H119 is a Cu cation binding site.

Belongs to the Cu-Zn superoxide dismutase family. As to quaternary structure, homodimer. The cofactor is Cu cation. It depends on Zn(2+) as a cofactor.

It is found in the cytoplasm. The enzyme catalyses 2 superoxide + 2 H(+) = H2O2 + O2. Destroys radicals which are normally produced within the cells and which are toxic to biological systems. This chain is Superoxide dismutase [Cu-Zn] (SODCC), found in Spinacia oleracea (Spinach).